Here is a 120-residue protein sequence, read N- to C-terminus: MRRLPTREVVDMKMVVAVIRPEKLECVKKALEERGFVGMTVTEVKGRGEQKGIRLQFRGREVEVDLLQKTKVEVVVSDDAVDEVVEAIVSSARTGKFGDGRIFVIPVEKSVKIRTGDEEV.

ADP is bound by residues threonine 40 and 48-50; that span reads GEQ. Residues threonine 40 and 48–50 each bind ATP; that span reads GEQ. Residues 48–52 and lysine 69 contribute to the 2-oxoglutarate site; that span reads GEQKG. ADP is bound by residues valine 75 and 98–101; that span reads GDGR. ATP is bound by residues valine 75 and 98-101; that span reads GDGR. Glycine 98 lines the 2-oxoglutarate pocket.

This sequence belongs to the P(II) protein family. In terms of assembly, homotrimer. Interacts and forms a complex with Amt3.

It is found in the cytoplasm. Activity is influenced by intracellular pools of the effector molecules ATP, ADP and 2-oxoglutarate. It senses the cellular nitrogen status through 2-oxoglutarate, and the energy level of the cell by binding both ATP and ADP with different affinities. ATP and 2-oxoglutarate prohibit binding to Amt3. ADP promotes the complex formation. Its function is as follows. Involved in the regulation of nitrogen metabolism. Regulates the activity of its targets by protein-protein interaction in response to the nitrogen status of the cell. Regulates the activity of the ammonia channel Amt3 via direct interaction. In Archaeoglobus fulgidus (strain ATCC 49558 / DSM 4304 / JCM 9628 / NBRC 100126 / VC-16), this protein is Nitrogen regulatory protein GlnK3.